The sequence spans 155 residues: uncharacterized protein (155 aa).

In terms of domain architecture, SCP spans 37-140 (IAELRKKLNL…GGYRLKTTDN (104 aa)).

This is an uncharacterized protein from Borreliella burgdorferi (strain ATCC 35210 / DSM 4680 / CIP 102532 / B31) (Borrelia burgdorferi).